Here is a 245-residue protein sequence, read N- to C-terminus: 4-hydroxy-tetrahydrodipicolinate reductase (245 aa).

NAD(+) is bound by residues 8 to 13 (GSTGKM), 78 to 80 (GTT), and 102 to 105 (SANM). H134 serves as the catalytic Proton donor/acceptor. H135 serves as a coordination point for (S)-2,3,4,5-tetrahydrodipicolinate. Residue K138 is the Proton donor of the active site. (S)-2,3,4,5-tetrahydrodipicolinate is bound at residue 144 to 145 (GT).

The protein belongs to the DapB family.

The protein localises to the cytoplasm. The catalysed reaction is (S)-2,3,4,5-tetrahydrodipicolinate + NAD(+) + H2O = (2S,4S)-4-hydroxy-2,3,4,5-tetrahydrodipicolinate + NADH + H(+). It carries out the reaction (S)-2,3,4,5-tetrahydrodipicolinate + NADP(+) + H2O = (2S,4S)-4-hydroxy-2,3,4,5-tetrahydrodipicolinate + NADPH + H(+). The protein operates within amino-acid biosynthesis; L-lysine biosynthesis via DAP pathway; (S)-tetrahydrodipicolinate from L-aspartate: step 4/4. Functionally, catalyzes the conversion of 4-hydroxy-tetrahydrodipicolinate (HTPA) to tetrahydrodipicolinate. The polypeptide is 4-hydroxy-tetrahydrodipicolinate reductase (Rickettsia akari (strain Hartford)).